The chain runs to 253 residues: Phosphate import ATP-binding protein PstB (253 aa).

The ABC transporter domain occupies 5-248; the sequence is IETVNLNVYY…PEHELTEKYV (244 aa). 37–44 contacts ATP; it reads GPSGCGKS.

The protein belongs to the ABC transporter superfamily. Phosphate importer (TC 3.A.1.7) family. As to quaternary structure, the complex is composed of two ATP-binding proteins (PstB), two transmembrane proteins (PstC and PstA) and a solute-binding protein (PstS).

The protein localises to the cell membrane. The catalysed reaction is phosphate(out) + ATP + H2O = ADP + 2 phosphate(in) + H(+). Part of the ABC transporter complex PstSACB involved in phosphate import. Responsible for energy coupling to the transport system. The chain is Phosphate import ATP-binding protein PstB from Thermococcus kodakarensis (strain ATCC BAA-918 / JCM 12380 / KOD1) (Pyrococcus kodakaraensis (strain KOD1)).